A 153-amino-acid polypeptide reads, in one-letter code: Protein Smg homolog (153 aa).

The protein belongs to the Smg family.

This Neisseria meningitidis serogroup B (strain ATCC BAA-335 / MC58) protein is Protein Smg homolog.